The chain runs to 424 residues: Probable ribonuclease FAU-1 (424 aa).

Belongs to the FAU-1 family.

In terms of biological role, probable RNase involved in rRNA stability through maturation and/or degradation of precursor rRNAs. Binds to RNA in loop regions with AU-rich sequences. The sequence is that of Probable ribonuclease FAU-1 from Saccharolobus islandicus (strain Y.G.57.14 / Yellowstone #1) (Sulfolobus islandicus).